Consider the following 159-residue polypeptide: Transcriptional repressor NrdR (159 aa).

A zinc finger lies at 3–34; it reads CPFCEYNGTRVLDSRPFNHNKSIRRRRECEAC. Residues 49–139 form the ATP-cone domain; sequence LLIVKKDGTR…VYRQFKDINV (91 aa).

The protein belongs to the NrdR family. It depends on Zn(2+) as a cofactor.

Functionally, negatively regulates transcription of bacterial ribonucleotide reductase nrd genes and operons by binding to NrdR-boxes. The chain is Transcriptional repressor NrdR from Brevibacillus brevis (strain 47 / JCM 6285 / NBRC 100599).